Consider the following 364-residue polypeptide: Fructose-bisphosphate aldolase A (364 aa).

The residue at position 9 (threonine 9) is a Phosphothreonine. Phosphoserine occurs at positions 36 and 39. Position 42 is an N6-acetyllysine; alternate (lysine 42). Lysine 42 is covalently cross-linked (Glycyl lysine isopeptide (Lys-Gly) (interchain with G-Cter in SUMO1); alternate). A Glycyl lysine isopeptide (Lys-Gly) (interchain with G-Cter in SUMO2); alternate cross-link involves residue lysine 42. Arginine 43 serves as a coordination point for beta-D-fructose 1,6-bisphosphate. Serine 46 carries the phosphoserine modification. N6-(2-hydroxyisobutyryl)lysine is present on lysine 99. Position 108 is an N6-acetyllysine (lysine 108). N6-acetyllysine; alternate is present on lysine 111. Lysine 111 bears the N6-malonyllysine; alternate mark. Serine 132 is modified (phosphoserine). Lysine 147 is subject to N6-(2-hydroxyisobutyryl)lysine. Glutamate 188 functions as the Proton acceptor in the catalytic mechanism. Lysine 230 functions as the Schiff-base intermediate with dihydroxyacetone-P in the catalytic mechanism. Serine 272 carries the post-translational modification Phosphoserine. Beta-D-fructose 1,6-bisphosphate-binding positions include 272-274, serine 301, and arginine 304; that span reads SGG. Lysine 312 bears the N6-malonyllysine mark. The residue at position 330 (lysine 330) is an N6-acetyllysine. A Deamidated asparagine; in form beta modification is found at asparagine 361.

The protein belongs to the class I fructose-bisphosphate aldolase family. As to quaternary structure, homotetramer. Interacts with SNX9 and WAS. Interacts with FBP2; the interaction blocks FBP2 inhibition by physiological concentrations of AMP and reduces inhibition by Ca(2+). Asn-361 in form alpha is deaminated to Asp in form beta.

Its subcellular location is the cytoplasm. It is found in the myofibril. The protein localises to the sarcomere. The protein resides in the i band. It localises to the m line. The catalysed reaction is beta-D-fructose 1,6-bisphosphate = D-glyceraldehyde 3-phosphate + dihydroxyacetone phosphate. The protein operates within carbohydrate degradation; glycolysis; D-glyceraldehyde 3-phosphate and glycerone phosphate from D-glucose: step 4/4. In terms of biological role, plays a key role in glycolysis and gluconeogenesis. In addition, may also function as scaffolding protein. This Oryctolagus cuniculus (Rabbit) protein is Fructose-bisphosphate aldolase A (ALDOA).